Consider the following 295-residue polypeptide: GTPase Era (295 aa).

In terms of domain architecture, Era-type G spans 7-176 (KTVSVCIIGR…ITSKAKIAPW (170 aa)). Positions 15-22 (GRPNSGKS) are G1. Residue 15–22 (GRPNSGKS) coordinates GTP. The G2 stretch occupies residues 41–45 (QTTRS). The G3 stretch occupies residues 62–65 (DTPG). GTP-binding positions include 62-66 (DTPGI) and 124-127 (NKID). The interval 124 to 127 (NKID) is G4. The interval 152-154 (ISA) is G5. Residues 204 to 281 (LQQELPYKLT…HLFLFVKVQE (78 aa)) enclose the KH type-2 domain.

This sequence belongs to the TRAFAC class TrmE-Era-EngA-EngB-Septin-like GTPase superfamily. Era GTPase family. Monomer.

The protein resides in the cytoplasm. Its subcellular location is the cell inner membrane. An essential GTPase that binds both GDP and GTP, with rapid nucleotide exchange. Plays a role in 16S rRNA processing and 30S ribosomal subunit biogenesis and possibly also in cell cycle regulation and energy metabolism. The chain is GTPase Era from Rickettsia bellii (strain RML369-C).